Reading from the N-terminus, the 323-residue chain is Cytochrome c biogenesis protein CcsA (323 aa).

Transmembrane regions (helical) follow at residues 9–29 (ILTH…LITL), 37–57 (LYVS…GLLV), 71–91 (LYES…FTYF), 100–120 (VSAI…SGFL), 145–165 (MVLG…LIVI), 227–247 (IISL…VWAN), 261–275 (TWAF…IYLH), and 288–308 (AIVA…VNLL).

This sequence belongs to the CcmF/CycK/Ccl1/NrfE/CcsA family. As to quaternary structure, may interact with Ccs1.

The protein resides in the plastid. Its subcellular location is the chloroplast thylakoid membrane. In terms of biological role, required during biogenesis of c-type cytochromes (cytochrome c6 and cytochrome f) at the step of heme attachment. The protein is Cytochrome c biogenesis protein CcsA of Cucumis sativus (Cucumber).